We begin with the raw amino-acid sequence, 345 residues long: MKLTKIRTEGDFNWGPFLTDSDGYFTIPIPDSQAGKKFRIRIEPWDINYAARIARDLDRCNEYVWFLSDEITVPDHGRLDLGELRIGKDANYDFTAYWQEKRHTCLFGLCACGGSVHVIQGGSVYLNIADALLAARAYADLHRSDDDGIGRVDVQYPDSDWSNYDQTWDEITLTTNHGFLDGVAIHEYGHFLEDHISEEDIYVGNTSHTFCDDKDDTEFAWSEGFAEYYGTFIVAINDHLSHPDISFGTIENPGCSKFDDDIEATVAAVLWDMVDNSSFPDYNASESFDTVGGLDDVIFKMFDSELDHWHDAPDLCEMHGNLDHRLDSTTLNKVERIFEHYNACR.

This is an uncharacterized protein from Archaeoglobus fulgidus (strain ATCC 49558 / DSM 4304 / JCM 9628 / NBRC 100126 / VC-16).